Reading from the N-terminus, the 240-residue chain is Urease accessory protein UreF (240 aa).

This sequence belongs to the UreF family. UreD, UreF and UreG form a complex that acts as a GTP-hydrolysis-dependent molecular chaperone, activating the urease apoprotein by helping to assemble the nickel containing metallocenter of UreC. The UreE protein probably delivers the nickel.

The protein resides in the cytoplasm. Its function is as follows. Required for maturation of urease via the functional incorporation of the urease nickel metallocenter. This Bradyrhizobium sp. (strain BTAi1 / ATCC BAA-1182) protein is Urease accessory protein UreF.